A 583-amino-acid polypeptide reads, in one-letter code: Probable cysteine--tRNA ligase, mitochondrial (583 aa).

C82 contributes to the Zn(2+) binding site. An L-cysteine-binding site is contributed by G83. The 'HIGH' region motif lies at 84–94 (PTVYSSSHIGH). T123 serves as a coordination point for L-cysteine. The 'KIIK' region motif lies at 128 to 131 (KIIN). Zn(2+) contacts are provided by C271, H296, and E300. H296 provides a ligand contact to L-cysteine. Residues 337-341 (KMSKS) carry the 'KMSKS' region motif. K340 serves as a coordination point for ATP.

The protein belongs to the class-I aminoacyl-tRNA synthetase family. It depends on Zn(2+) as a cofactor.

It localises to the mitochondrion. It carries out the reaction tRNA(Cys) + L-cysteine + ATP = L-cysteinyl-tRNA(Cys) + AMP + diphosphate. Its function is as follows. Mitochondrial cysteine-specific aminoacyl-tRNA synthetase that catalyzes the ATP-dependent ligation of cysteine to tRNA(Cys). In addition to its role as an aminoacyl-tRNA synthetase, has also cysteine persulfide synthase activity. Produces reactive persulfide species such as cysteine persulfide (CysSSH) from substrate cysteine and mediate direct incorporation of CysSSH into proteins during translations, resulting in protein persulfides and polysulfides. CysSSHs behave as potent antioxidants and cellular protectants. The protein is Probable cysteine--tRNA ligase, mitochondrial (mcysS) of Dictyostelium discoideum (Social amoeba).